We begin with the raw amino-acid sequence, 311 residues long: Putative dihydroorotate dehydrogenase A (fumarate) (311 aa).

Residues lysine 45, 69–73 (NSMGL), and asparagine 128 contribute to the substrate site. 45–46 (KT) lines the FMN pocket. Asparagine 128 serves as a coordination point for FMN. Cysteine 131 functions as the Nucleophile in the catalytic mechanism. Lysine 165 and valine 193 together coordinate FMN. A substrate-binding site is contributed by 194–195 (NS). FMN is bound by residues glycine 220, 248–249 (GG), and 270–271 (GT).

This sequence belongs to the dihydroorotate dehydrogenase family. Type 1 subfamily. Homodimer. The cofactor is FMN.

It localises to the cytoplasm. The enzyme catalyses (S)-dihydroorotate + fumarate = orotate + succinate. It functions in the pathway pyrimidine metabolism; UMP biosynthesis via de novo pathway. Functionally, catalyzes the conversion of dihydroorotate to orotate with fumarate as the electron acceptor. The protein is Putative dihydroorotate dehydrogenase A (fumarate) (pyrD) of Streptococcus pyogenes serotype M5 (strain Manfredo).